Reading from the N-terminus, the 436-residue chain is MSHEAVWQHVLEHIRRSITEVEFHTWFERIRPLGIRDGVLELAVPTSFALDWIRRHYAGLIQEALGLLGAQAPRFELRVVPGVVVQEDIFQAAPAEAPRPKLNPKYTFENFVVGPNNSMAHAAAVAVAESPGRAYNPLFIYGGVGLGKTHLMHAVGHSVAKRFPHLRIEYVSTETFTNELINAIREDRMTEFRERYRSVDLLLVDDVQFIAGKERTQEEFFHTFNALYEAHKQIILSSDRPPKDILTLEARLRSRFEWGLITDIQPPDLETRIAILKMNAEQRGLRIPEDALEYIARQVTSNIRELEGALMRAIAFASLNGVELTRAVAAKALSDIFAPRELEADPLEIIRKVADHFGLKPEELTGSGRKKEVVLPRQLAMYLVRELTRASLPEIGQLFGGRDHTTVLYAIQKVQELAESDREVQGLLRTLREACT.

Positions 1–80 (MSHEAVWQHV…QAPRFELRVV (80 aa)) are domain I, interacts with DnaA modulators. Residues 80-100 (VPGVVVQEDIFQAAPAEAPRP) form a domain II region. A domain III, AAA+ region region spans residues 101-317 (KLNPKYTFEN…GALMRAIAFA (217 aa)). The ATP site is built by Gly-145, Gly-147, Lys-148, and Thr-149. The tract at residues 318 to 436 (SLNGVELTRA…LLRTLREACT (119 aa)) is domain IV, binds dsDNA.

The protein belongs to the DnaA family. In terms of assembly, oligomerizes as a right-handed, spiral filament on DNA at oriC.

Its subcellular location is the cytoplasm. It catalyses the reaction ATP + H2O = ADP + phosphate + H(+). Its function is as follows. Plays an essential role in the initiation and regulation of chromosomal replication. ATP-DnaA binds to the origin of replication (oriC) to initiate formation of the DNA replication initiation complex once per cell cycle. Binds the DnaA box (a 9 base pair repeat at the origin) and separates the double-stranded (ds)DNA. Forms a right-handed helical filament on oriC DNA; dsDNA binds to the exterior of the filament while single-stranded (ss)DNA is stabiized in the filament's interior. The ATP-DnaA-oriC complex binds and stabilizes one strand of the AT-rich DNA unwinding element (DUE), permitting loading of DNA polymerase. After initiation quickly degrades to an ADP-DnaA complex that is not apt for DNA replication. Binds acidic phospholipids. In terms of biological role, the DnaA box consensus is 5'-TTATC[CA]A[CA]A-3' in this bacterium; oriC consists of 13 clustered DnaA boxes and a 40 base pair AT-rich region. ATP-DnaA binds cooperatively to multiple DnaA boxes, while ADP-DnaA binds with low cooperativity to the individual DnaA boxes. About 16-18 DnaA protein molecules bind their sites in oriC. Has a slow ATPase activity. Binds linear and supercoiled DNA. This is Chromosomal replication initiator protein DnaA from Thermus thermophilus (strain ATCC 27634 / DSM 579 / HB8).